The following is a 238-amino-acid chain: Ribonuclease PH (238 aa).

Phosphate contacts are provided by residues Arg-86 and 124–126; that span reads GTR.

The protein belongs to the RNase PH family. As to quaternary structure, homohexameric ring arranged as a trimer of dimers.

It catalyses the reaction tRNA(n+1) + phosphate = tRNA(n) + a ribonucleoside 5'-diphosphate. Its function is as follows. Phosphorolytic 3'-5' exoribonuclease that plays an important role in tRNA 3'-end maturation. Removes nucleotide residues following the 3'-CCA terminus of tRNAs; can also add nucleotides to the ends of RNA molecules by using nucleoside diphosphates as substrates, but this may not be physiologically important. Probably plays a role in initiation of 16S rRNA degradation (leading to ribosome degradation) during starvation. This Dichelobacter nodosus (strain VCS1703A) protein is Ribonuclease PH.